Consider the following 647-residue polypeptide: Nucleoside triphosphatase I (647 aa).

Residues 48–212 (FIGLKNLNSM…NNLIGLLRPN (165 aa)) enclose the Helicase ATP-binding domain. ATP is bound at residue 61-68 (WDTGTGKT). Residues 150–153 (DEVH) carry the DEXH box motif. Positions 378–541 (YIEACRIILN…KINVVFDLLK (164 aa)) constitute a Helicase C-terminal domain. The interval 467–533 (DIIILDMPWN…DIIKNKQGKI (67 aa)) is binding to the cap-specific mRNA (nucleoside-2'-O-)-methyltransferase.

It belongs to the helicase family. NPH I subfamily. In terms of assembly, monomer. Interacts (via C-terminus) with RAP94 (via N-terminus). Interacts with the cap-specific mRNA (nucleoside-2'-O-)-methyltransferase.

Its subcellular location is the virion. It carries out the reaction a ribonucleoside 5'-triphosphate + H2O = a ribonucleoside 5'-diphosphate + phosphate + H(+). Functionally, DNA-dependent ATPase required for providing the needed energy to achieve the termination of early transcripts. Acts in concert with the RAP94 subunit of the virion RNA polymerase and the capping enzyme/VTF to catalyze release of UUUUUNU-containing nascent RNA from the elongation complex. NPH-I must bind ssDNA in order to exhibit ATPase activity. The protein is Nucleoside triphosphatase I (NPH1) of Choristoneura fumiferana (Spruce budworm moth).